Reading from the N-terminus, the 312-residue chain is MNNKTVITHFLLLGLPIPPEHQQLFFALFLIMYLTTFLGNLLIVVLVQLDSHLHTPMYLFLSNLSFSDLCFSSVTMLKLLQNIQSQVPSISYAGCLTQIFFFLLFGYLGNFLLVAMAYDRYVAICFPLHYTNIMSHKLCTCLLLVFWIMTSSHAMMHTLLAARLSFCENNVLLNFFCDLFVLLKLACSDTYVNELMIHIMGVIIIVIPFVLIVISYAKIISSILKVPSTQSIHKVFSTCGSHLSVVSLFYGTIIGLYLCPSGDNFSLKGSAMAMMYTVVTPMLNPFIYSLRNRDMKQALIRVTCSKKISLPW.

The Extracellular portion of the chain corresponds to 1-23 (MNNKTVITHFLLLGLPIPPEHQQ). The N-linked (GlcNAc...) asparagine glycan is linked to N3. A helical transmembrane segment spans residues 24 to 48 (LFFALFLIMYLTTFLGNLLIVVLVQ). Topologically, residues 49–55 (LDSHLHT) are cytoplasmic. A helical transmembrane segment spans residues 56–77 (PMYLFLSNLSFSDLCFSSVTML). The Extracellular segment spans residues 78–98 (KLLQNIQSQVPSISYAGCLTQ). C95 and C187 form a disulfide bridge. Residues 99–118 (IFFFLLFGYLGNFLLVAMAY) form a helical membrane-spanning segment. Topologically, residues 119-137 (DRYVAICFPLHYTNIMSHK) are cytoplasmic. A helical membrane pass occupies residues 138 to 156 (LCTCLLLVFWIMTSSHAMM). The Extracellular portion of the chain corresponds to 157-194 (HTLLAARLSFCENNVLLNFFCDLFVLLKLACSDTYVNE). The chain crosses the membrane as a helical span at residues 195–217 (LMIHIMGVIIIVIPFVLIVISYA). Over 218–234 (KIISSILKVPSTQSIHK) the chain is Cytoplasmic. The helical transmembrane segment at 235-258 (VFSTCGSHLSVVSLFYGTIIGLYL) threads the bilayer. Topologically, residues 259–270 (CPSGDNFSLKGS) are extracellular. A helical membrane pass occupies residues 271-290 (AMAMMYTVVTPMLNPFIYSL). Topologically, residues 291–312 (RNRDMKQALIRVTCSKKISLPW) are cytoplasmic.

The protein belongs to the G-protein coupled receptor 1 family. As to expression, olfactory epithelium.

It localises to the cell membrane. Its function is as follows. Odorant receptor. The chain is Olfactory receptor 1493 (Olr1493) from Rattus norvegicus (Rat).